The chain runs to 197 residues: Peptide deformylase (197 aa).

Fe cation-binding residues include cysteine 106 and histidine 148. Glutamate 149 is a catalytic residue. Histidine 152 contacts Fe cation.

The protein belongs to the polypeptide deformylase family. Requires Fe(2+) as cofactor.

It carries out the reaction N-terminal N-formyl-L-methionyl-[peptide] + H2O = N-terminal L-methionyl-[peptide] + formate. Functionally, removes the formyl group from the N-terminal Met of newly synthesized proteins. Requires at least a dipeptide for an efficient rate of reaction. N-terminal L-methionine is a prerequisite for activity but the enzyme has broad specificity at other positions. This Mycobacterium sp. (strain JLS) protein is Peptide deformylase.